Reading from the N-terminus, the 615-residue chain is Mitochondrial distribution and morphology protein 34 (615 aa).

Positions 1–195 (MAFNFNWSPL…LPAIIHRLSL (195 aa)) constitute an SMP-LTD domain. Disordered regions lie at residues 293-313 (SDKPDATATPASTPNLHRTSS), 346-566 (ATTG…PQPD), and 596-615 (PAFWEDSHQHDIPPPAYEPR). A compositionally biased stretch (polar residues) spans 301–313 (TPASTPNLHRTSS). The span at 346-355 (ATTGLSLGSG) shows a compositional bias: low complexity. Residues 356-367 (RHSKAGRKKKMR) show a composition bias toward basic residues. Composition is skewed to polar residues over residues 384–403 (IGSTSSQAGDSHTEASTRTP), 435–446 (DATTSARASESS), and 457–499 (VTAQ…YSSR). The segment covering 517–557 (QQQQFQQQQQQQQQQQQQQQQQQQQQQQQQQQQQQQQQQQQ) has biased composition (low complexity). Basic and acidic residues predominate over residues 596 to 606 (PAFWEDSHQHD).

It belongs to the MDM34 family. As to quaternary structure, component of the ER-mitochondria encounter structure (ERMES) or MDM complex, composed of mmm-1, mdm10, mdm12 and mdm34.

The protein localises to the mitochondrion outer membrane. Its function is as follows. Component of the ERMES/MDM complex, which serves as a molecular tether to connect the endoplasmic reticulum (ER) and mitochondria. Components of this complex are involved in the control of mitochondrial shape and protein biogenesis, and function in nonvesicular lipid trafficking between the ER and mitochondria. Mdm34 is required for the interaction of the ER-resident membrane protein mmm-1 and the outer mitochondrial membrane-resident beta-barrel protein mdm10. In Neurospora crassa (strain ATCC 24698 / 74-OR23-1A / CBS 708.71 / DSM 1257 / FGSC 987), this protein is Mitochondrial distribution and morphology protein 34.